Consider the following 407-residue polypeptide: Substance-P receptor (407 aa).

Over 1-31 (MDNVLQVDSDLFPNISTNTSEPNQFVQPAWQ) the chain is Extracellular. 2 N-linked (GlcNAc...) asparagine glycosylation sites follow: Asn14 and Asn18. Residues 32 to 54 (IVLWAAAYTVIVVTSVVGNVVVM) form a helical membrane-spanning segment. Residues 55 to 64 (WIILAHKRMR) are Cytoplasmic-facing. The chain crosses the membrane as a helical span at residues 65-86 (TVTNYFLVNLAFAEASMAAFNT). Topologically, residues 87–106 (VVNFTYAVHNEWYYGLFYCK) are extracellular. Cys105 and Cys180 are joined by a disulfide. Residues 107–128 (FHNFFPIAAVFASIYSMTAVAF) traverse the membrane as a helical segment. The Cytoplasmic portion of the chain corresponds to 129 to 148 (DRYMAIIHPLQPRLSATATK). A helical transmembrane segment spans residues 149–169 (VVICVIWVLALLLAFPQGYYS). At 170-194 (TTETMPNRVVCMIEWPEHPNKIYEK) the chain is on the extracellular side. Residues 195–219 (VYHICVTVLIYFLPLLVIGYAYTVV) traverse the membrane as a helical segment. The Cytoplasmic segment spans residues 220-248 (GITLWASEIPGDSSDRYHEQVSAKRKVVK). Residues 249–270 (MMIVVVCTFAICWLPFHIFFLL) form a helical membrane-spanning segment. At 271–283 (PYINPDLYLEKFI) the chain is on the extracellular side. Residues 284–308 (QQVYLAIMWLAMSSTMYNPIIYCCL) form a helical membrane-spanning segment. Residues 309-407 (NDRFRLGFKH…SFSFYSNMLS (99 aa)) are Cytoplasmic-facing. The S-palmitoyl cysteine moiety is linked to residue Cys322. The segment at 365–394 (HEEELEDGPKTTPSSLDLTSNGSSRSDSKT) is disordered. Over residues 375-394 (TTPSSLDLTSNGSSRSDSKT) the composition is skewed to polar residues.

It belongs to the G-protein coupled receptor 1 family. Interacts with ARRB1.

The protein localises to the cell membrane. This is a receptor for the tachykinin neuropeptide substance P. It is probably associated with G proteins that activate a phosphatidylinositol-calcium second messenger system. This chain is Substance-P receptor (TACR1), found in Canis lupus familiaris (Dog).